Reading from the N-terminus, the 151-residue chain is FUN14 domain-containing protein 1 (151 aa).

The short motif at 14–17 is the YXXL element; it reads YEVL. Transmembrane regions (helical) follow at residues 44–64, 71–91, and 130–150; these read YSVATQIVMGGVSGWCAGFLF, AATAVGGGFLLLQIASHGGYI, and FIKKNIVVSGGFVGGFLLGLA.

It belongs to the FUN14 family.

The protein resides in the mitochondrion outer membrane. Functionally, acts as an activator of hypoxia-induced mitophagy, an important mechanism for mitochondrial quality control. The sequence is that of FUN14 domain-containing protein 1 (fundc1) from Xenopus tropicalis (Western clawed frog).